We begin with the raw amino-acid sequence, 1342 residues long: Receptor tyrosine-protein kinase erbB-3 (1342 aa).

A signal peptide spans Met1–Gly19. Residues Ser20 to Thr643 are Extracellular-facing. Cys29 and Cys56 are disulfide-bonded. N-linked (GlcNAc...) asparagine glycosylation is present at Asn126. 12 disulfides stabilise this stretch: Cys156–Cys183, Cys186–Cys194, Cys190–Cys202, Cys210–Cys218, Cys214–Cys226, Cys227–Cys235, Cys231–Cys243, Cys246–Cys255, Cys259–Cys286, Cys290–Cys301, Cys305–Cys320, and Cys323–Cys327. A glycan (N-linked (GlcNAc...) asparagine) is linked at Asn250. N-linked (GlcNAc...) asparagine glycosylation is found at Asn353, Asn408, Asn414, Asn437, and Asn469. Intrachain disulfides connect Cys500–Cys509, Cys504–Cys517, Cys520–Cys529, Cys533–Cys549, Cys552–Cys565, Cys556–Cys573, Cys576–Cys585, Cys589–Cys610, Cys613–Cys621, and Cys617–Cys629. The N-linked (GlcNAc...) asparagine glycan is linked to Asn522. A glycan (N-linked (GlcNAc...) asparagine) is linked at Asn566. Asn616 is a glycosylation site (N-linked (GlcNAc...) asparagine). The chain crosses the membrane as a helical span at residues Met644–Leu664. The Cytoplasmic segment spans residues Tyr665–Thr1342. Ser686 carries the post-translational modification Phosphoserine. Positions Leu709–Thr966 constitute a Protein kinase domain. ATP-binding positions include Leu715–Val723, Lys742, Gln788–Leu790, and Asn834–Asn839. Catalysis depends on Asn834, which acts as the Proton acceptor. Disordered regions lie at residues Arg980 to Lys999 and Leu1033 to Glu1152. Ser982 carries the post-translational modification Phosphoserine. Positions Arg1042–Ser1075 are enriched in polar residues.

The protein belongs to the protein kinase superfamily. Tyr protein kinase family. EGF receptor subfamily. As to quaternary structure, monomer and homodimer. Heterodimer with each of the other ERBB receptors (Potential). Interacts with CSPG5. Interacts with GRB7. Interacts with MUC1. Interacts with MYOC. Interacts with isoform 2 of PA2G4. Found in a ternary complex with NRG1 and ITGAV:ITGB3 or ITGA6:ITGB4. Post-translationally, autophosphorylated. Ligand-binding increases phosphorylation on tyrosine residues and promotes its association with the p85 subunit of phosphatidylinositol 3-kinase. Epithelial tissues and brain.

The protein localises to the cell membrane. Its subcellular location is the secreted. The enzyme catalyses L-tyrosyl-[protein] + ATP = O-phospho-L-tyrosyl-[protein] + ADP + H(+). In terms of biological role, tyrosine-protein kinase that plays an essential role as cell surface receptor for neuregulins. Binds to neuregulin-1 (NRG1) and is activated by it; ligand-binding increases phosphorylation on tyrosine residues and promotes its association with the p85 subunit of phosphatidylinositol 3-kinase. May also be activated by CSPG5. Involved in the regulation of myeloid cell differentiation. The sequence is that of Receptor tyrosine-protein kinase erbB-3 (ERBB3) from Homo sapiens (Human).